The sequence spans 335 residues: Glyceraldehyde-3-phosphate dehydrogenase, cytosolic (335 aa).

NAD(+) is bound by residues 13 to 14, Asp-35, and Arg-80; that span reads RI. Residues 151–153, Thr-182, 211–212, and Arg-234 contribute to the D-glyceraldehyde 3-phosphate site; these read SCT and TG. Cys-152 serves as the catalytic Nucleophile. Asn-316 is an NAD(+) binding site.

It belongs to the glyceraldehyde-3-phosphate dehydrogenase family. As to quaternary structure, homotetramer.

It is found in the cytoplasm. It catalyses the reaction D-glyceraldehyde 3-phosphate + phosphate + NAD(+) = (2R)-3-phospho-glyceroyl phosphate + NADH + H(+). It functions in the pathway carbohydrate degradation; glycolysis; pyruvate from D-glyceraldehyde 3-phosphate: step 1/5. In Chondrus crispus (Carrageen Irish moss), this protein is Glyceraldehyde-3-phosphate dehydrogenase, cytosolic (GAPC).